The sequence spans 180 residues: UPF0397 protein SSA_0592 (180 aa).

Transmembrane regions (helical) follow at residues 9–29 (VVAT…NIPT), 45–65 (LFSV…GHAI), 72–92 (GGLW…VGFF), 113–133 (LIQF…DVIV), and 146–166 (IVAI…LLTA).

Belongs to the UPF0397 family.

The protein resides in the cell membrane. The polypeptide is UPF0397 protein SSA_0592 (Streptococcus sanguinis (strain SK36)).